Reading from the N-terminus, the 415-residue chain is MSLSNKLPVTDVDLKGKRVLIRVDFNVPLDENENVTNPQRIVGALPTIKYAIDNGRKAVVLMSHLGRPDGKVNPKYSLKPVVPVLEELLGKSVTFTEDCIGPQTEETVNKASDGQVILLENLRFHAEEEGSSKDAEGKKVKADKADVDRSASLTALGDVYVNDAFGTAQRAHSSMVGVDLPQKAAGFLVKKELEYFAKALESPARPFLAILGGAKVSDKIPVIDNLLPKVNSLIIIGGMALTFKKTLENVKIGNSLFDEAGSKILGEIVEKAKKHNVEIVLPVDYVTADKFSADATVGSATTQRIPDGYMGSDVGPESVKLYQKTIAEAKTILWNGPPGVFELKPSPRPTEATLDAAVKAAESGSIVIIGGGDTATVAAKYKAEDKISHVSTGGGASLELLEGKELPGVAALSSK.

13 residues coordinate (2R)-3-phosphoglycerate: valine 23, aspartate 24, phenylalanine 25, asparagine 26, glutamine 39, arginine 40, serine 63, histidine 64, glycine 66, arginine 67, leucine 122, arginine 123, and arginine 170. Glycine 213 is a binding site for ADP. Glycine 213 provides a ligand contact to CDP. Residues alanine 214 and lysine 215 each coordinate AMP. Position 214 (alanine 214) interacts with ATP. A Mg(2+)-binding site is contributed by alanine 214. Aspartate 218 is a binding site for CDP. Aspartate 218 contributes to the Mg(2+) binding site. Lysine 219 serves as a coordination point for AMP. Lysine 219 contacts ATP. Glycine 237 serves as a coordination point for ADP. Glycine 237 is a CDP binding site. Residues glycine 238 and glycine 311 each coordinate AMP. ATP is bound by residues glycine 238 and glycine 311. CDP contacts are provided by glycine 336 and phenylalanine 341. Phenylalanine 341 contributes to the ADP binding site. AMP is bound at residue glutamate 342. The ATP site is built by glutamate 342, aspartate 373, and threonine 374. Aspartate 373 contributes to the Mg(2+) binding site.

This sequence belongs to the phosphoglycerate kinase family. As to quaternary structure, monomer. The cofactor is Mg(2+).

It localises to the cytoplasm. Its subcellular location is the mitochondrion. The enzyme catalyses (2R)-3-phosphoglycerate + ATP = (2R)-3-phospho-glyceroyl phosphate + ADP. It participates in carbohydrate degradation; glycolysis; pyruvate from D-glyceraldehyde 3-phosphate: step 2/5. In terms of biological role, catalyzes one of the two ATP producing reactions in the glycolytic pathway via the reversible conversion of 1,3-diphosphoglycerate to 3-phosphoglycerate. Both L- and D- forms of purine and pyrimidine nucleotides can be used as substrates, but the activity is much lower on pyrimidines. Negatively regulates the biosynthesis of acetyl-CoA from pyruvate in the mitochondrion. The sequence is that of Phosphoglycerate kinase (PGKA) from Penicillium chrysogenum (Penicillium notatum).